The sequence spans 205 residues: Beta-crystallin B2 (205 aa).

Ala2 carries the N-acetylalanine modification. The N-terminal arm stretch occupies residues 2 to 16; the sequence is ASDHQTQAGKPQPLN. 2 consecutive Beta/gamma crystallin 'Greek key' domains span residues 17–56 and 57–101; these read PKII…LVQA and GPWV…RPIK. The segment at 102–106 is connecting peptide; that stretch reads VDSQE. 2 consecutive Beta/gamma crystallin 'Greek key' domains span residues 107 to 148 and 149 to 191; these read HKII…RVQS and GTWV…RRIR. Positions 193–205 are C-terminal arm; it reads MQWHQRGAFHPTN.

Belongs to the beta/gamma-crystallin family. In terms of assembly, homo/heterodimer, or complexes of higher-order. The structure of beta-crystallin oligomers seems to be stabilized through interactions between the N-terminal arms.

Crystallins are the dominant structural components of the vertebrate eye lens. The protein is Beta-crystallin B2 (CRYBB2) of Oryctolagus cuniculus (Rabbit).